Here is a 404-residue protein sequence, read N- to C-terminus: F-box protein At2g17036 (404 aa).

In terms of domain architecture, F-box spans Met-2–Leu-50.

This is F-box protein At2g17036 from Arabidopsis thaliana (Mouse-ear cress).